Here is a 382-residue protein sequence, read N- to C-terminus: Na(+)/H(+) antiporter NhaA 2 (382 aa).

The next 11 helical transmembrane spans lie at 7 to 27 (MVLS…LALL), 58 to 78 (LDLW…GLEL), 94 to 114 (SLPI…FAAI), 124 to 144 (GWAI…MLLG), 153 to 173 (LFLL…IALF), 178 to 198 (LSAL…LLNY), 199 to 219 (YHIT…IAML), 255 to 275 (NPWV…GIDI), 291 to 311 (IILG…FIAI), 327 to 347 (FYGI…IDGL), and 361 to 381 (LAIL…LKIV).

It belongs to the NhaA Na(+)/H(+) (TC 2.A.33) antiporter family.

The protein resides in the cell inner membrane. The catalysed reaction is Na(+)(in) + 2 H(+)(out) = Na(+)(out) + 2 H(+)(in). Na(+)/H(+) antiporter that extrudes sodium in exchange for external protons. The chain is Na(+)/H(+) antiporter NhaA 2 from Campylobacter jejuni subsp. jejuni serotype O:6 (strain 81116 / NCTC 11828).